The primary structure comprises 139 residues: uncharacterized protein (139 aa).

This is an uncharacterized protein from Halalkalibacterium halodurans (strain ATCC BAA-125 / DSM 18197 / FERM 7344 / JCM 9153 / C-125) (Bacillus halodurans).